The following is a 237-amino-acid chain: Demethylmenaquinone methyltransferase (237 aa).

S-adenosyl-L-methionine contacts are provided by residues T58, D79, and 106–107 (NA).

This sequence belongs to the class I-like SAM-binding methyltransferase superfamily. MenG/UbiE family.

The enzyme catalyses a 2-demethylmenaquinol + S-adenosyl-L-methionine = a menaquinol + S-adenosyl-L-homocysteine + H(+). It participates in quinol/quinone metabolism; menaquinone biosynthesis; menaquinol from 1,4-dihydroxy-2-naphthoate: step 2/2. In terms of biological role, methyltransferase required for the conversion of demethylmenaquinol (DMKH2) to menaquinol (MKH2). This is Demethylmenaquinone methyltransferase from Anoxybacillus flavithermus (strain DSM 21510 / WK1).